The following is a 655-amino-acid chain: Protein-glucosylgalactosylhydroxylysine glucosidase (655 aa).

Tryptophan 258–aspartate 259 is a substrate binding site. Glutamate 388 acts as the Proton donor in catalysis. Residue lysine 456 to glutamine 457 participates in substrate binding.

Belongs to the glycosyl hydrolase 65 family.

It carries out the reaction (5R)-5-O-[alpha-D-glucosyl-(1-&gt;2)-beta-D-galactosyl]-5-hydroxy-L-lysyl-[collagen] + H2O = (5R)-5-O-(beta-D-galactosyl)-5-hydroxy-L-lysyl-[collagen] + D-glucose. In terms of biological role, catalyzes the hydrolysis of glucose from the disaccharide unit linked to hydroxylysine residues of collagen and collagen-like proteins. In Danio rerio (Zebrafish), this protein is Protein-glucosylgalactosylhydroxylysine glucosidase.